The sequence spans 106 residues: Iron-sulfur cluster assembly protein CyaY (106 aa).

This sequence belongs to the frataxin family.

In terms of biological role, involved in iron-sulfur (Fe-S) cluster assembly. May act as a regulator of Fe-S biogenesis. The sequence is that of Iron-sulfur cluster assembly protein CyaY from Shigella flexneri.